We begin with the raw amino-acid sequence, 217 residues long: Glycerol-3-phosphate acyltransferase (217 aa).

Transmembrane regions (helical) follow at residues 3-23, 56-76, 78-98, 120-140, 142-162, and 163-183; these read IVILLLVAYLLGSIPSGVWIG, VLLMDILKGTLATSLPYLFGL, GVNPLFFGVAAVLGHTFPIFA, FFIYSALIFVICLYLTSMVSL, SMISAVLITLSTIILPFTVPA, and ILPTFNWLLTVIAIALTTFIF.

It belongs to the PlsY family. Probably interacts with PlsX.

Its subcellular location is the cell membrane. The catalysed reaction is an acyl phosphate + sn-glycerol 3-phosphate = a 1-acyl-sn-glycero-3-phosphate + phosphate. Its pathway is lipid metabolism; phospholipid metabolism. Functionally, catalyzes the transfer of an acyl group from acyl-phosphate (acyl-PO(4)) to glycerol-3-phosphate (G3P) to form lysophosphatidic acid (LPA). This enzyme utilizes acyl-phosphate as fatty acyl donor, but not acyl-CoA or acyl-ACP. The chain is Glycerol-3-phosphate acyltransferase from Enterococcus faecalis (strain ATCC 700802 / V583).